Consider the following 31-residue polypeptide: Large ribosomal subunit protein bL21 (31 aa).

It belongs to the bacterial ribosomal protein bL21 family. As to quaternary structure, part of the 50S ribosomal subunit. Contacts protein L20.

Its function is as follows. This protein binds to 23S rRNA in the presence of protein L20. The protein is Large ribosomal subunit protein bL21 (rplU) of Streptococcus thermophilus.